The primary structure comprises 555 residues: O-fucosyltransferase 20 (555 aa).

Topologically, residues 1 to 58 (MALPKNGGNSSSTKKKVSYISVPSQIINSLSSSSLQSLLVSPKKSSRCTNRFSYRNPR) are cytoplasmic. Residues 59-79 (IWFLTLFLVSLFGMLKLGLNV) traverse the membrane as a helical; Signal-anchor for type II membrane protein segment. The Lumenal segment spans residues 80 to 555 (DPISLPFSRY…MCSDRRQQQQ (476 aa)). Residues 110 to 130 (KNDTQSSSSSEHRKNETLPTE) are disordered. Residues N111 and N124 are each glycosylated (N-linked (GlcNAc...) asparagine). 330 to 332 (HLR) contacts substrate. N-linked (GlcNAc...) asparagine glycosylation is found at N371 and N503. Residues 525 to 555 (QPELRTGRGGKDVTKHPVSECMCSDRRQQQQ) form a disordered region. The span at 529 to 555 (RTGRGGKDVTKHPVSECMCSDRRQQQQ) shows a compositional bias: basic and acidic residues.

It belongs to the glycosyltransferase GT106 family. Highly expressed in embryogenic microspore and in vegetative tissues.

Its subcellular location is the golgi apparatus membrane. It functions in the pathway glycan metabolism. Its function is as follows. May play a role in the biosynthesis of matrix polysaccharides and contribute to the biomechanics and development of the plant cell wall. This chain is O-fucosyltransferase 20, found in Brassica napus (Rape).